The sequence spans 232 residues: Response regulator MprA (232 aa).

Residues 4-118 (RILVVDDDRA…ELLARMRALL (115 aa)) form the Response regulatory domain. At aspartate 48 the chain carries 4-aspartylphosphate. The ompR/PhoB-type DNA-binding region spans 131 to 229 (SVAMTFSDLS…VRGVGYVLRE (99 aa)).

Post-translationally, phosphorylated and dephosphorylated by MprB.

Its subcellular location is the cytoplasm. Its function is as follows. Member of the two-component regulatory system MprB/MprA which contributes to maintaining a balance among several systems involved in stress resistance and is required for establishment and maintenance of persistent infection in the host. Functions as a transcriptional regulator that recognizes a 19-bp nucleotide motif comprizing two loosely conserved 8-bp direct DNA-binding motif repeats separated by a 3-bp spacer region. The polypeptide is Response regulator MprA (mprA) (Mycobacterium ulcerans (strain Agy99)).